The chain runs to 474 residues: tRNA-2-methylthio-N(6)-dimethylallyladenosine synthase (474 aa).

The region spanning 3-120 (KKLHIKTWGC…LPEMINSVRG (118 aa)) is the MTTase N-terminal domain. Positions 12, 49, 83, 157, 161, and 164 each coordinate [4Fe-4S] cluster. The Radical SAM core domain maps to 143–375 (RAEGPTAFVS…QERINQQAMA (233 aa)). The 64-residue stretch at 378–441 (RRMLGTTQRI…PNSLRGKVVR (64 aa)) folds into the TRAM domain.

This sequence belongs to the methylthiotransferase family. MiaB subfamily. As to quaternary structure, monomer. [4Fe-4S] cluster is required as a cofactor.

It is found in the cytoplasm. The catalysed reaction is N(6)-dimethylallyladenosine(37) in tRNA + (sulfur carrier)-SH + AH2 + 2 S-adenosyl-L-methionine = 2-methylsulfanyl-N(6)-dimethylallyladenosine(37) in tRNA + (sulfur carrier)-H + 5'-deoxyadenosine + L-methionine + A + S-adenosyl-L-homocysteine + 2 H(+). In terms of biological role, catalyzes the methylthiolation of N6-(dimethylallyl)adenosine (i(6)A), leading to the formation of 2-methylthio-N6-(dimethylallyl)adenosine (ms(2)i(6)A) at position 37 in tRNAs that read codons beginning with uridine. The polypeptide is tRNA-2-methylthio-N(6)-dimethylallyladenosine synthase (Escherichia coli O81 (strain ED1a)).